We begin with the raw amino-acid sequence, 607 residues long: MDKQDRYNRRKNIRNFSIIAHIDHGKSTLADRILENTKSVETRDMQSQLLDSMDLERERGITIKLNAVRLKYEAKDGETYTFHLIDTPGHVDFTYEVSRSLAACEGAILVVDAAQGIEAQTLANVYLALDNDLELLPVINKIDLPAAEPERVKQELEDVIGIDKEDVVLASAKSNIGIEDILEKIVEVVPPPEGDPEAPLKALIFDSEYDPYRGVISSIRVMEGVVKAGDRIKMMATGKEFEVTEVGINTPKQLSVDELTVGDVGYIIASIKNVDDSRVGDTITHAERPAEAPLQGYKKMNPMVFCGLFPIDNKDYNDLREALEKLQLNDASLEFEPESSQALGFGYRTGFLGMLHMEIIQERIEREFGIELIATAPSVIYQCILKSGEEVSVDNPANMPDRDKIETIYEPFVRATMMVPNDYVGAVMELCQRKRGQFINMEYMDDIRVNIIYEIPLSEVVFDFFDQLKSNTKGYASFDYEFIDNKESDLVKMDILLNGEKVDALSFIVHKEFAYERGKTLVDKLKTLIPRQQFEVPVQAAVGQKIVARTNIKSMGKNVLSKCYGGDITRKRKLLEKQKAGKAKMKAVGNVEIPQDAFLAVLKMDED.

Positions 11–193 (KNIRNFSIIA…KIVEVVPPPE (183 aa)) constitute a tr-type G domain. GTP is bound by residues 23 to 28 (DHGKST) and 140 to 143 (NKID).

This sequence belongs to the TRAFAC class translation factor GTPase superfamily. Classic translation factor GTPase family. LepA subfamily.

Its subcellular location is the cell membrane. It carries out the reaction GTP + H2O = GDP + phosphate + H(+). In terms of biological role, required for accurate and efficient protein synthesis under certain stress conditions. May act as a fidelity factor of the translation reaction, by catalyzing a one-codon backward translocation of tRNAs on improperly translocated ribosomes. Back-translocation proceeds from a post-translocation (POST) complex to a pre-translocation (PRE) complex, thus giving elongation factor G a second chance to translocate the tRNAs correctly. Binds to ribosomes in a GTP-dependent manner. This chain is Elongation factor 4, found in Staphylococcus saprophyticus subsp. saprophyticus (strain ATCC 15305 / DSM 20229 / NCIMB 8711 / NCTC 7292 / S-41).